The sequence spans 517 residues: Protein disulfide-isomerase EUG1 (517 aa).

Residues 1-29 (MQVTTRFISAIVSFCLFASFTLAENSARA) form the signal peptide. Residues 30-141 (TPGSDLLVLT…ITQYMIQLYE (112 aa)) enclose the Thioredoxin 1 domain. N-linked (GlcNAc...) asparagine glycosylation is found at N159, N174, N207, N293, and N462. The 133-residue stretch at 355 to 487 (YREGTAKPIV…VFEFIKESGT (133 aa)) folds into the Thioredoxin 2 domain. The Prevents secretion from ER signature appears at 514 to 517 (HDEL).

The protein belongs to the protein disulfide isomerase family. In terms of assembly, interacts with EPS1. In terms of processing, may have O-linked mannose residues.

It is found in the endoplasmic reticulum lumen. It catalyses the reaction Catalyzes the rearrangement of -S-S- bonds in proteins.. Probably interacts with nascent polypeptides in the endoplasmic reticulum. It is an essential gene only in the absence of PDI. Its native disulfide isomerase activity is very low. This Saccharomyces cerevisiae (strain ATCC 204508 / S288c) (Baker's yeast) protein is Protein disulfide-isomerase EUG1 (EUG1).